The primary structure comprises 172 residues: Translationally-controlled tumor protein homolog (172 aa).

The TCTP domain occupies 1–172 (MIIYRDCISQ…FKDGLEIEKC (172 aa)). At Ser46 the chain carries Phosphoserine; by PLK1.

The protein belongs to the TCTP family.

It localises to the cytoplasm. Its function is as follows. Involved in calcium binding and microtubule stabilization. The sequence is that of Translationally-controlled tumor protein homolog (TPT1) from Gallus gallus (Chicken).